Reading from the N-terminus, the 303-residue chain is uncharacterized protein (303 aa).

Transmembrane regions (helical) follow at residues 102 to 122 (TYLLSIIMMVLLCMLPSVMAI), 132 to 152 (FVLFDDIFILITFILIPFLFF), 184 to 204 (LLYFFFLLLWVPQGFLQSLIY), and 221 to 241 (FILLGIDLIFILFAIWNFLLF).

It is found in the membrane. This is an uncharacterized protein from Dictyostelium discoideum (Social amoeba).